A 422-amino-acid chain; its full sequence is PHAF1 protein T01G9.2 (422 aa).

It belongs to the PHAF1 family.

The protein resides in the cytoplasm. It is found in the preautophagosomal structure. In terms of biological role, may play a regulatory role in autophagic activity. The chain is PHAF1 protein T01G9.2 from Caenorhabditis elegans.